Reading from the N-terminus, the 566-residue chain is Lactase-like protein (566 aa).

The first 20 residues, 1–20, serve as a signal peptide directing secretion; that stretch reads MKPVWVIILGWILLVPRVGT. Residues 21 to 540 are Extracellular-facing; the sequence is AWRGPPEEAS…LLRHMHVASE (520 aa). 2 N-linked (GlcNAc...) asparagine glycosylation sites follow: N170 and N244. A helical membrane pass occupies residues 541–561; it reads IVVPTVCALSILTAALMLTLL. Residues 562-566 lie on the Cytoplasmic side of the membrane; sequence LRRRG.

Belongs to the glycosyl hydrolase 1 family. Klotho subfamily. In terms of assembly, may form dimers. As to expression, strongly expressed in the lens of the eye, where it localizes to the equatorial epithelium and outer layers of newly extending fiber cells (at protein level). May also be expressed in kidney and skin. However, another study suggests that expression is specific to eye and is minimal in other tissues.

It localises to the endoplasmic reticulum membrane. Plays a role in formation of the lens suture in the eye, which is important for normal optical properties of the lens. The chain is Lactase-like protein (Lctl) from Mus musculus (Mouse).